The sequence spans 106 residues: Large ribosomal subunit protein uL24 (106 aa).

Residues 84–97 (EKIGRELGAKEKAR) show a composition bias toward basic and acidic residues. A disordered region spans residues 84-106 (EKIGRELGAKEKARLQKRKAAAK).

This sequence belongs to the universal ribosomal protein uL24 family. In terms of assembly, part of the 50S ribosomal subunit.

In terms of biological role, one of two assembly initiator proteins, it binds directly to the 5'-end of the 23S rRNA, where it nucleates assembly of the 50S subunit. Functionally, one of the proteins that surrounds the polypeptide exit tunnel on the outside of the subunit. The chain is Large ribosomal subunit protein uL24 from Anaeromyxobacter sp. (strain K).